The following is a 500-amino-acid chain: Glycogen synthase (500 aa).

K20 lines the ADP-alpha-D-glucose pocket.

The protein belongs to the glycosyltransferase 1 family. Bacterial/plant glycogen synthase subfamily.

It catalyses the reaction [(1-&gt;4)-alpha-D-glucosyl](n) + ADP-alpha-D-glucose = [(1-&gt;4)-alpha-D-glucosyl](n+1) + ADP + H(+). The protein operates within glycan biosynthesis; glycogen biosynthesis. Functionally, synthesizes alpha-1,4-glucan chains using ADP-glucose. The sequence is that of Glycogen synthase from Desulforudis audaxviator (strain MP104C).